The primary structure comprises 86 residues: Large ribosomal subunit protein bL31 (86 aa).

The interval 65 to 86 (YGMGSADSATSKETKESKKSDK) is disordered. A compositionally biased stretch (basic and acidic residues) spans 74–86 (TSKETKESKKSDK).

The protein belongs to the bacterial ribosomal protein bL31 family. Type A subfamily. Part of the 50S ribosomal subunit.

Functionally, binds the 23S rRNA. This is Large ribosomal subunit protein bL31 from Prochlorococcus marinus subsp. pastoris (strain CCMP1986 / NIES-2087 / MED4).